Here is a 178-residue protein sequence, read N- to C-terminus: MSRIGRLPISVPAGVEVSVDGSAVSVKGPKGTLTHTVSAPITVVVEDGTVQVSRPNDERESRSLHGLTRSLIANMIQGVSEGYTKQLEIVGTGYRVQAKGADLEFALGYSHPVPFSAPDGITLSVEGNNKVTVSGIDKQQVGQVAAKIRSLRLPDPYKGKGVRYAGEQIRRKAGKAGK.

The protein belongs to the universal ribosomal protein uL6 family. In terms of assembly, part of the 50S ribosomal subunit.

In terms of biological role, this protein binds to the 23S rRNA, and is important in its secondary structure. It is located near the subunit interface in the base of the L7/L12 stalk, and near the tRNA binding site of the peptidyltransferase center. This is Large ribosomal subunit protein uL6 from Kocuria rhizophila (strain ATCC 9341 / DSM 348 / NBRC 103217 / DC2201).